The primary structure comprises 60 residues: UPF0434 protein NMCC_0628 (60 aa).

Belongs to the UPF0434 family.

The protein is UPF0434 protein NMCC_0628 of Neisseria meningitidis serogroup C (strain 053442).